A 467-amino-acid polypeptide reads, in one-letter code: Ethanolamine ammonia-lyase reactivase EutA (467 aa).

It belongs to the EutA family.

Its subcellular location is the bacterial microcompartment. Its pathway is amine and polyamine degradation; ethanolamine degradation. Reactivates suicidally inhibited ethanolamine ammonia-lyase (EAL), cyanocobalamin-inactivated EAL and O(2)-inactivated EAL; requires Mg(2+), ATP and adenosylcobalamin. Reactivation probably occurs by the ATP-dependent exchange of cobalamin. Protects EAL from inhibition by CN-B12, does not have adenosylation activity. In terms of biological role, expression of the eut operon allows this bacteria to use ethanolamine as a carbon, nitrogen and energy source. It relies on cobalamin (vitamin B12) both as a cofactor for the ethanolamine ammonia-lyase (EAL) activity and to induce the operon. EA enhances bacterial survival in macrophages in a concentration-dependent manner, suggesting it is an important nutrient during infection. The sequence is that of Ethanolamine ammonia-lyase reactivase EutA from Salmonella typhimurium (strain LT2 / SGSC1412 / ATCC 700720).